The following is a 481-amino-acid chain: 3-isopropylmalate dehydratase large subunit (481 aa).

Cysteine 363, cysteine 423, and cysteine 426 together coordinate [4Fe-4S] cluster. Residues 434 to 465 form a disordered region; that stretch reads LRPGQRAASTSNRNFEGRQGRGGRTHLVSPPV.

Belongs to the aconitase/IPM isomerase family. LeuC type 1 subfamily. Heterodimer of LeuC and LeuD. [4Fe-4S] cluster is required as a cofactor.

It catalyses the reaction (2R,3S)-3-isopropylmalate = (2S)-2-isopropylmalate. Its pathway is amino-acid biosynthesis; L-leucine biosynthesis; L-leucine from 3-methyl-2-oxobutanoate: step 2/4. Functionally, catalyzes the isomerization between 2-isopropylmalate and 3-isopropylmalate, via the formation of 2-isopropylmaleate. This chain is 3-isopropylmalate dehydratase large subunit, found in Salinispora tropica (strain ATCC BAA-916 / DSM 44818 / JCM 13857 / NBRC 105044 / CNB-440).